A 417-amino-acid polypeptide reads, in one-letter code: Tyrosine--tRNA ligase (417 aa).

L-tyrosine is bound at residue Y39. Positions 44–53 (PTASSLHAGS) match the 'HIGH' region motif. L-tyrosine is bound by residues Y176 and Q180. A 'KMSKS' region motif is present at residues 236 to 240 (KMGKS). ATP is bound at residue K239. Positions 350-417 (AGLLALLVQA…KKKHVLIKPL (68 aa)) constitute an S4 RNA-binding domain.

This sequence belongs to the class-I aminoacyl-tRNA synthetase family. TyrS type 1 subfamily. As to quaternary structure, homodimer.

It is found in the cytoplasm. The catalysed reaction is tRNA(Tyr) + L-tyrosine + ATP = L-tyrosyl-tRNA(Tyr) + AMP + diphosphate + H(+). Catalyzes the attachment of tyrosine to tRNA(Tyr) in a two-step reaction: tyrosine is first activated by ATP to form Tyr-AMP and then transferred to the acceptor end of tRNA(Tyr). This Bartonella quintana (strain Toulouse) (Rochalimaea quintana) protein is Tyrosine--tRNA ligase.